A 513-amino-acid polypeptide reads, in one-letter code: Dye-decolorizing peroxidase msp1 (513 aa).

Positions 1–20 are cleaved as a signal peptide; sequence MKLFSASVFAAIIASHYASA. The propeptide occupies 21 to 55; it reads TAHIRAPNVKPRRTNSLLTAPPQQPPLPSAQQAAS. The tract at residues 33 to 52 is disordered; the sequence is RTNSLLTAPPQQPPLPSAQQ. Catalysis depends on aspartate 228, which acts as the Proton acceptor. Histidine 365 is a heme binding site.

In terms of assembly, homodimer. Requires heme b as cofactor.

Its subcellular location is the secreted. It catalyses the reaction Reactive Blue 5 + 2 H2O2 = 2,2'-disulfonyl azobenzene + 3-[(4-amino-6-chloro-1,3,5-triazin-2-yl)amino]benzenesulfonate + phthalate + 2 H2O + 2 H(+). The enzyme catalyses 2 a phenolic donor + H2O2 = 2 a phenolic radical donor + 2 H2O. Its function is as follows. Manganese-independent peroxidase that is able to convert a large number of compounds, but its physiological substrate is not known. In addition to classic peroxidase substrates (e.g. 2,6-dimethoxyphenol), oxidizes dyes such as Reactive Blue 5. Also degrades beta-carotene. This is Dye-decolorizing peroxidase msp1 from Mycetinis scorodonius (Garlic mushroom).